Reading from the N-terminus, the 94-residue chain is Small ribosomal subunit protein bS6 (94 aa).

The protein belongs to the bacterial ribosomal protein bS6 family.

Its function is as follows. Binds together with bS18 to 16S ribosomal RNA. In Clostridium botulinum (strain 657 / Type Ba4), this protein is Small ribosomal subunit protein bS6.